Consider the following 191-residue polypeptide: 3-isopropylmalate dehydratase small subunit (191 aa).

This sequence belongs to the LeuD family. LeuD type 1 subfamily. In terms of assembly, heterodimer of LeuC and LeuD.

It catalyses the reaction (2R,3S)-3-isopropylmalate = (2S)-2-isopropylmalate. The protein operates within amino-acid biosynthesis; L-leucine biosynthesis; L-leucine from 3-methyl-2-oxobutanoate: step 2/4. Functionally, catalyzes the isomerization between 2-isopropylmalate and 3-isopropylmalate, via the formation of 2-isopropylmaleate. This chain is 3-isopropylmalate dehydratase small subunit, found in Anaeromyxobacter sp. (strain K).